We begin with the raw amino-acid sequence, 500 residues long: Cytochrome P450 71B36 (500 aa).

A helical transmembrane segment spans residues 1–21 (MATILFLSLLFLSCILLAAFT). Cys440 contacts heme.

This sequence belongs to the cytochrome P450 family. Heme is required as a cofactor.

The protein resides in the membrane. In Arabidopsis thaliana (Mouse-ear cress), this protein is Cytochrome P450 71B36 (CYP71B36).